The following is a 176-amino-acid chain: MTLDALLQSLPPYAKDVRLNFSSLGREETLTAQQRDGLLVACGLASRNPDLARALEAEAAPRLSPAALAAAKAAATVMAMNNVYYRFTHLASNPAYATRPAKLRMSSIGNPGVARADFELWSLAVSAINGCGRCIDAHEQVLREAGVGEEAIQAAVRVAAVVASLAVALESVRAAA.

Catalysis depends on cysteine 131, which acts as the Proton donor. Cysteine 131 and cysteine 134 are disulfide-bonded. The active-site Cysteine sulfenic acid (-SOH) intermediate is cysteine 134.

Belongs to the AhpD family.

The catalysed reaction is N(6)-[(R)-dihydrolipoyl]-L-lysyl-[lipoyl-carrier protein] + a hydroperoxide = N(6)-[(R)-lipoyl]-L-lysyl-[lipoyl-carrier protein] + an alcohol + H2O. Functionally, antioxidant protein with alkyl hydroperoxidase activity. Required for the reduction of the AhpC active site cysteine residues and for the regeneration of the AhpC enzyme activity. In Methylobacterium sp. (strain 4-46), this protein is Alkyl hydroperoxide reductase AhpD.